Consider the following 135-residue polypeptide: Ribosome-binding factor A (135 aa).

The protein belongs to the RbfA family. As to quaternary structure, monomer. Binds 30S ribosomal subunits, but not 50S ribosomal subunits or 70S ribosomes.

The protein localises to the cytoplasm. One of several proteins that assist in the late maturation steps of the functional core of the 30S ribosomal subunit. Associates with free 30S ribosomal subunits (but not with 30S subunits that are part of 70S ribosomes or polysomes). Required for efficient processing of 16S rRNA. May interact with the 5'-terminal helix region of 16S rRNA. The chain is Ribosome-binding factor A from Rhodopseudomonas palustris (strain HaA2).